A 406-amino-acid polypeptide reads, in one-letter code: Putative F-box protein At5g38270 (406 aa).

One can recognise an F-box domain in the interval 20–67 (HDWSKLCPDILRSILESLSSTDFHRAKTVCSDWYSNWKTCVKPLCPWR).

This is Putative F-box protein At5g38270 from Arabidopsis thaliana (Mouse-ear cress).